A 237-amino-acid chain; its full sequence is Purine nucleoside phosphorylase DeoD-type (237 aa).

Histidine 4 contributes to the a purine D-ribonucleoside binding site. Phosphate contacts are provided by residues glycine 20, arginine 24, arginine 43, and 87–90 (RVGT). A purine D-ribonucleoside is bound by residues 179–181 (EME) and 203–204 (SD). Aspartate 204 acts as the Proton donor in catalysis.

It belongs to the PNP/UDP phosphorylase family. As to quaternary structure, homohexamer; trimer of homodimers.

The catalysed reaction is a purine D-ribonucleoside + phosphate = a purine nucleobase + alpha-D-ribose 1-phosphate. The enzyme catalyses a purine 2'-deoxy-D-ribonucleoside + phosphate = a purine nucleobase + 2-deoxy-alpha-D-ribose 1-phosphate. Catalyzes the reversible phosphorolytic breakdown of the N-glycosidic bond in the beta-(deoxy)ribonucleoside molecules, with the formation of the corresponding free purine bases and pentose-1-phosphate. The polypeptide is Purine nucleoside phosphorylase DeoD-type (Streptococcus uberis (strain ATCC BAA-854 / 0140J)).